Consider the following 511-residue polypeptide: Maturase K (511 aa).

The protein belongs to the intron maturase 2 family. MatK subfamily.

The protein resides in the plastid. It localises to the chloroplast. In terms of biological role, usually encoded in the trnK tRNA gene intron. Probably assists in splicing its own and other chloroplast group II introns. The sequence is that of Maturase K from Hordeum murinum subsp. leporinum (Mouse barley).